A 333-amino-acid polypeptide reads, in one-letter code: Fructose-1,6-bisphosphatase class 1 1 (333 aa).

Residues Glu-81, Asp-100, Leu-102, and Asp-103 each coordinate Mg(2+). Residues 103 to 106 (DGSS) and Asn-191 each bind substrate. Position 263 (Glu-263) interacts with Mg(2+).

It belongs to the FBPase class 1 family. Homotetramer. It depends on Mg(2+) as a cofactor.

It is found in the cytoplasm. The catalysed reaction is beta-D-fructose 1,6-bisphosphate + H2O = beta-D-fructose 6-phosphate + phosphate. It functions in the pathway carbohydrate biosynthesis; gluconeogenesis. Fructose-1,6-bisphosphatase II is not light-activated. This chain is Fructose-1,6-bisphosphatase class 1 1, found in Cereibacter sphaeroides (Rhodobacter sphaeroides).